Here is a 746-residue protein sequence, read N- to C-terminus: Quiannulatene synthase (746 aa).

The segment at 1 to 336 (MASEVIVISD…SRYPTKTELN (336 aa)) is sesterterpenoid synthase. Asp95 is a binding site for Mg(2+). Positions 338–746 (PEVIIVDGEL…VELMLRRLWV (409 aa)) are geranylfarnesyl diphosphate synthase. Residues Lys465, Arg468, and His497 each contribute to the isopentenyl diphosphate site. Residues Asp504 and Asp508 each contribute to the Mg(2+) site. Arg513 serves as a coordination point for dimethylallyl diphosphate. Arg514 provides a ligand contact to isopentenyl diphosphate. Dimethylallyl diphosphate contacts are provided by Lys591, Thr592, Gln628, Asn635, and Lys645.

In the N-terminal section; belongs to the terpene synthase family. This sequence in the C-terminal section; belongs to the FPP/GGPP synthase family. Mg(2+) serves as cofactor.

It catalyses the reaction isopentenyl diphosphate + (2E,6E)-farnesyl diphosphate = (2E,6E,10E)-geranylgeranyl diphosphate + diphosphate. The enzyme catalyses (2E,6E,10E,14E)-geranylfarnesyl diphosphate = quiannulatene + diphosphate. It participates in secondary metabolite biosynthesis; terpenoid biosynthesis. Bifunctional sesterterpene synthase; part of the gene cluster that mediates the biosynthesis of the pentacyclic sesterterpene quiannulatic acid. The first step of the pathway is performed by the sesterterpene synthase (QS) that possesses both prenyl transferase and terpene cyclase activity, converting isopentenyl diphosphate and dimethylallyl diphosphate into geranylfarnesyl diphosphate (GFPP) and further converting GFPP into quiannulatene via an unprecedented cyclization mode which involves three rounds of hydride shifts and two successive C-C bond migrations to construct the 5-6-5-5-5 fused ring. The cytochrome P450 monooxygenase Qnn-P450 then oxidizes quiannulatene at C-19 in 3 successive reactions to afford quiannulatic acid. This is Quiannulatene synthase from Emericella variicolor (Aspergillus stellatus).